A 119-amino-acid chain; its full sequence is Large ribosomal subunit protein uL22 (119 aa).

This sequence belongs to the universal ribosomal protein uL22 family. As to quaternary structure, part of the 50S ribosomal subunit.

Its function is as follows. This protein binds specifically to 23S rRNA; its binding is stimulated by other ribosomal proteins, e.g. L4, L17, and L20. It is important during the early stages of 50S assembly. It makes multiple contacts with different domains of the 23S rRNA in the assembled 50S subunit and ribosome. Functionally, the globular domain of the protein is located near the polypeptide exit tunnel on the outside of the subunit, while an extended beta-hairpin is found that lines the wall of the exit tunnel in the center of the 70S ribosome. The sequence is that of Large ribosomal subunit protein uL22 from Rickettsia felis (strain ATCC VR-1525 / URRWXCal2) (Rickettsia azadi).